We begin with the raw amino-acid sequence, 226 residues long: Lipoprotein-releasing system ATP-binding protein LolD (226 aa).

The region spanning 5-225 (FALSNISKFF…EINSCMLSSV (221 aa)) is the ABC transporter domain. 40 to 47 (GRSGSGKS) contacts ATP.

This sequence belongs to the ABC transporter superfamily. Lipoprotein translocase (TC 3.A.1.125) family. In terms of assembly, the complex is composed of two ATP-binding proteins (LolD) and two transmembrane proteins (LolC and LolE).

It localises to the cell inner membrane. Its function is as follows. Part of the ABC transporter complex LolCDE involved in the translocation of mature outer membrane-directed lipoproteins, from the inner membrane to the periplasmic chaperone, LolA. Responsible for the formation of the LolA-lipoprotein complex in an ATP-dependent manner. This Ehrlichia canis (strain Jake) protein is Lipoprotein-releasing system ATP-binding protein LolD.